A 233-amino-acid chain; its full sequence is Orotidine 5'-phosphate decarboxylase (233 aa).

Substrate is bound by residues D9, K31, 58–67 (DLKLHDIPNT), T120, R182, Q191, G211, and R212. The Proton donor role is filled by K60.

The protein belongs to the OMP decarboxylase family. Type 1 subfamily. In terms of assembly, homodimer.

It catalyses the reaction orotidine 5'-phosphate + H(+) = UMP + CO2. It participates in pyrimidine metabolism; UMP biosynthesis via de novo pathway; UMP from orotate: step 2/2. Its function is as follows. Catalyzes the decarboxylation of orotidine 5'-monophosphate (OMP) to uridine 5'-monophosphate (UMP). The protein is Orotidine 5'-phosphate decarboxylase of Listeria innocua serovar 6a (strain ATCC BAA-680 / CLIP 11262).